Consider the following 177-residue polypeptide: MSRVAKAPVTIPAGVEVTLNGQEIAVKGKNGTLKRILNAAVIVTKEENVLKFAPQEGVTGADAQAGTARALVNNMVIGVTTGFERKLVLVGVGYRAQAKGKSVGLALGFSHPIDHELPEGVTAECPTQTEIVLKSADKAMLGQVAADIRAYRSPEPYKGKGVRYSDEVVRTKEAKKK.

Belongs to the universal ribosomal protein uL6 family. In terms of assembly, part of the 50S ribosomal subunit.

Its function is as follows. This protein binds to the 23S rRNA, and is important in its secondary structure. It is located near the subunit interface in the base of the L7/L12 stalk, and near the tRNA binding site of the peptidyltransferase center. This is Large ribosomal subunit protein uL6 from Tolumonas auensis (strain DSM 9187 / NBRC 110442 / TA 4).